The following is a 533-amino-acid chain: Probable lipid II flippase MurJ (533 aa).

14 helical membrane-spanning segments follow: residues 11-31 (LANI…FGLL), 39-61 (AFGV…FLFI), 96-116 (LVSG…GIFI), 135-155 (LQIM…FGTL), 166-186 (ISPL…VWQL), 196-216 (WLLG…LQWL), 253-273 (LSSG…SFIP), 284-304 (FVAL…FLPV), 330-350 (LTMF…VQVI), 360-380 (AAAE…FYLG), 400-420 (VSLF…KPFG), 422-442 (VGIV…FIWM), 452-472 (LGGW…ASVA), and 493-513 (ILEV…GVAL).

Belongs to the MurJ/MviN family.

The protein resides in the cell inner membrane. The protein operates within cell wall biogenesis; peptidoglycan biosynthesis. In terms of biological role, involved in peptidoglycan biosynthesis. Transports lipid-linked peptidoglycan precursors from the inner to the outer leaflet of the cytoplasmic membrane. The chain is Probable lipid II flippase MurJ from Synechocystis sp. (strain ATCC 27184 / PCC 6803 / Kazusa).